A 354-amino-acid polypeptide reads, in one-letter code: Transcription factor ATOH1 (354 aa).

The span at 1-21 (MSRLLHAEEWAEVKELGDHHR) shows a compositional bias: basic and acidic residues. Disordered regions lie at residues 1 to 55 (MSRL…ELSL) and 91 to 122 (EAAAPRDEVDGRGELVRRSSGGASSSKSPGPV). A compositionally biased stretch (pro residues) spans 26–38 (HHLPQPPPPPQPP). A compositionally biased stretch (basic and acidic residues) spans 94–107 (APRDEVDGRGELVR). Residues 108-122 (RSSGGASSSKSPGPV) are compositionally biased toward low complexity. The 53-residue stretch at 159-211 (QRRLAANARERRRMHGLNHAFDQLRNVIPSFNNDKKLSKYETLQMAQIYINAL) folds into the bHLH domain. 2 disordered regions span residues 216 to 277 (QTPS…TRFS) and 312 to 354 (SPSL…DEAS). Positions 250–264 (NATAAGAQQASGGSQ) are enriched in low complexity. Residues 335–354 (HRSDGEFSPHSHYSDSDEAS) are compositionally biased toward basic and acidic residues.

In terms of assembly, efficient DNA binding requires dimerization with another bHLH protein.

The protein localises to the nucleus. In terms of biological role, transcriptional regulator. Activates E box-dependent transcription in collaboration with TCF3/E47, but the activity is completely antagonized by the negative regulator of neurogenesis HES1. Plays a role in the differentiation of subsets of neural cells by activating E box-dependent transcription. The chain is Transcription factor ATOH1 from Homo sapiens (Human).